Consider the following 315-residue polypeptide: Methionyl-tRNA formyltransferase (315 aa).

113–116 lines the (6S)-5,6,7,8-tetrahydrofolate pocket; the sequence is SLLP.

Belongs to the Fmt family.

It carries out the reaction L-methionyl-tRNA(fMet) + (6R)-10-formyltetrahydrofolate = N-formyl-L-methionyl-tRNA(fMet) + (6S)-5,6,7,8-tetrahydrofolate + H(+). In terms of biological role, attaches a formyl group to the free amino group of methionyl-tRNA(fMet). The formyl group appears to play a dual role in the initiator identity of N-formylmethionyl-tRNA by promoting its recognition by IF2 and preventing the misappropriation of this tRNA by the elongation apparatus. The protein is Methionyl-tRNA formyltransferase of Yersinia pseudotuberculosis serotype O:1b (strain IP 31758).